We begin with the raw amino-acid sequence, 434 residues long: Cysteine--tRNA ligase (434 aa).

Zn(2+) is bound at residue Cys28. A 'HIGH' region motif is present at residues 30-40; sequence PTVYDDIHIGN. Positions 207, 232, and 236 each coordinate Zn(2+). The 'KMSKS' region motif lies at 264–268; the sequence is KMSKS. Lys267 contributes to the ATP binding site.

It belongs to the class-I aminoacyl-tRNA synthetase family. In terms of assembly, monomer. Zn(2+) is required as a cofactor.

It is found in the cytoplasm. It carries out the reaction tRNA(Cys) + L-cysteine + ATP = L-cysteinyl-tRNA(Cys) + AMP + diphosphate. The sequence is that of Cysteine--tRNA ligase from Acholeplasma laidlawii (strain PG-8A).